A 439-amino-acid chain; its full sequence is GTPase Der (439 aa).

2 EngA-type G domains span residues 3 to 167 (PTVA…DKVG) and 176 to 351 (IKVA…GNYT). GTP-binding positions include 9–16 (GRPNVGKS), 56–60 (DTGGI), 119–122 (NKID), 182–189 (GKPNTGKS), 229–233 (DTAGL), and 294–297 (NKWD). A KH-like domain is found at 352–436 (RRITTGQIND…PIVFLIREKG (85 aa)).

The protein belongs to the TRAFAC class TrmE-Era-EngA-EngB-Septin-like GTPase superfamily. EngA (Der) GTPase family. Associates with the 50S ribosomal subunit.

In terms of biological role, GTPase that plays an essential role in the late steps of ribosome biogenesis. This chain is GTPase Der, found in Caldicellulosiruptor saccharolyticus (strain ATCC 43494 / DSM 8903 / Tp8T 6331).